The chain runs to 363 residues: Pyrimidine monooxygenase RutA (363 aa).

Residues 49–50 (IK), N115, E124, 140–141 (RY), and S190 each bind FMN.

It belongs to the NtaA/SnaA/DszA monooxygenase family. RutA subfamily.

It carries out the reaction uracil + FMNH2 + NADH + O2 = (Z)-3-ureidoacrylate + FMN + NAD(+) + H2O + H(+). It catalyses the reaction thymine + FMNH2 + NADH + O2 = (Z)-2-methylureidoacrylate + FMN + NAD(+) + H2O + H(+). Functionally, catalyzes the pyrimidine ring opening between N-3 and C-4 by an unusual flavin hydroperoxide-catalyzed mechanism, adding oxygen atoms in the process to yield ureidoacrylate peracid, that immediately reacts with FMN forming ureidoacrylate and FMN-N(5)-oxide. The FMN-N(5)-oxide reacts spontaneously with NADH to produce FMN. Requires the flavin reductase RutF to regenerate FMN in vivo. This Escherichia coli (strain SMS-3-5 / SECEC) protein is Pyrimidine monooxygenase RutA.